Consider the following 253-residue polypeptide: Phosphate import ATP-binding protein PstB (253 aa).

An ABC transporter domain is found at 5-248 (IETINLHVYY…PEHELTEKYV (244 aa)). 37 to 44 (GPSGCGKS) is an ATP binding site.

It belongs to the ABC transporter superfamily. Phosphate importer (TC 3.A.1.7) family. The complex is composed of two ATP-binding proteins (PstB), two transmembrane proteins (PstC and PstA) and a solute-binding protein (PstS).

It localises to the cell membrane. The catalysed reaction is phosphate(out) + ATP + H2O = ADP + 2 phosphate(in) + H(+). Part of the ABC transporter complex PstSACB involved in phosphate import. Responsible for energy coupling to the transport system. In Pyrococcus furiosus (strain ATCC 43587 / DSM 3638 / JCM 8422 / Vc1), this protein is Phosphate import ATP-binding protein PstB.